The chain runs to 127 residues: Mating pheromone 4 (127 aa).

The first 16 residues, 1-16 (MKAIFIILAILMVTQA), serve as a signal peptide directing secretion. Residues 17–42 (FKMTSKVKSMNMSRNMSKNTSTLGTK) constitute a propeptide that is removed on maturation.

Its subcellular location is the secreted. Functionally, mating ciliate pheromones (or gamones) are diffusible extracellular communication signals that distinguish different intraspecific classes of cells commonly referred to as 'mating types'. They prepare the latter for conjugation by changing their cell surface properties. This is Mating pheromone 4 (PHR4) from Euplotoides octocarinatus (Freshwater ciliate).